The primary structure comprises 876 residues: AP-5 complex subunit beta-1 (876 aa).

In terms of assembly, probably part of the adaptor protein complex 5 (AP-5), a tetramer composed of AP5B1, AP5M1, AP5S1 and AP5Z1. Interacts with ZFYVE26 and SPG11.

Functionally, as part of AP-5, a probable fifth adaptor protein complex, it may be involved in endosomal transport. This Rattus norvegicus (Rat) protein is AP-5 complex subunit beta-1 (Ap5b1).